Reading from the N-terminus, the 300-residue chain is MRPETAIIEIHGQYRIHTEFYGNPAAQQTIILVNGSLSTTASFAQTVKYLQPHYNVVLYDQPYAGQSKPHNENHTPISKECEARILLELIERFRAEVVMSFSWGGVATLLALAQRPGRIRRAVVNSFSPQLNPAMLDYLHRGLDYLAACDRTQIGNLVNETIGRYLPQLFKRYNFRHVSSLDEHEYHQMHFHIREVLRLNADSYTESFAGIEIPMLFMNGELDIYTTPHEARQFGQLIRGAEFHTIRNAGHFIDVEHKAAWQQTQDALLAFLRPQRTQPLNPIYRPQPNGASVPLAALAS.

Residues 29-253 (TIILVNGSLS…HTIRNAGHFI (225 aa)) form the AB hydrolase-1 domain.

The protein operates within polyester biosynthesis; polyhydroxyalkanoate biosynthesis. Its function is as follows. Catalyzes the transfer of the acyl moiety from in vitro synthesized 3-hydroxydecanoyl-CoA to acyl carrier protein. In Pseudomonas aeruginosa (strain ATCC 15692 / DSM 22644 / CIP 104116 / JCM 14847 / LMG 12228 / 1C / PRS 101 / PAO1), this protein is (R)-3-hydroxydecanoyl-ACP:CoA transacylase (phaG).